The following is a 192-amino-acid chain: Probable nicotinate-nucleotide adenylyltransferase (192 aa).

This sequence belongs to the NadD family.

The enzyme catalyses nicotinate beta-D-ribonucleotide + ATP + H(+) = deamido-NAD(+) + diphosphate. It participates in cofactor biosynthesis; NAD(+) biosynthesis; deamido-NAD(+) from nicotinate D-ribonucleotide: step 1/1. In terms of biological role, catalyzes the reversible adenylation of nicotinate mononucleotide (NaMN) to nicotinic acid adenine dinucleotide (NaAD). The protein is Probable nicotinate-nucleotide adenylyltransferase of Cereibacter sphaeroides (strain ATCC 17029 / ATH 2.4.9) (Rhodobacter sphaeroides).